The chain runs to 675 residues: MHHVNKYFNQTMVIEALKMSFYKLNPKQLIKNPIMFVVEVGMILTLILICFPDIFGTSYLSRSYLITIFIILLITILFANFSEAFAEGRGKAQADSLRQAQSNLTARLIEENGAYRIVNATELKAGQNIRVENGETIPADGVVINGLATVDESAITGESAPVIKESGGDFDGVIGGTLVTSDWLEIRVESEAGTSFLDKMIALVEGAERNKTPNEIALFTLLTTLTIIFLVVIVTLYPIASYLHLILPIAMLIALTVCLIPTTIGGLLSAIGIAGMDRVTQFNVLAKSGRAVEVCGDVDVMILDKTGTITYGNRIASEFLPVNQQMWEKLIVAAYMSSIYDDTPEGKSIVRLAKQMYINELPKDIDGTYKPFTAETRMSGIITNEISVFKGAPNSMINLVKQQQGDIPLNIESICMDVSSKGGTPLIVIENNVMLGVIYLKDVIKDGLVERFAELRKMGIETVMCTGDNALTAATIAKEAGVDRFVAECKPEDKIKVIKDEQAKGHIVAMTGDGTNDAPALAQANIGLAMNSGTISAKEAANLIDLDSNPTKLIEVVKIGKQLLMTRGALTTFSLANDVAKYFAILPALMMSTIPEMTLLNIMHLSSPKSAIISALIFNALIIVALIPIAMKGVKVKGYSIDRIFINNMLIYGLGGLIVPFLGIKLIDMIVQFFV.

4 helical membrane passes run 34–54, 65–85, 216–236, and 245–265; these read IMFV…FPDI, LITI…SEAF, IALF…IVTL, and LILP…TTIG. D304 serves as the catalytic 4-aspartylphosphate intermediate. ATP contacts are provided by residues D341, E345, 372 to 379, and K390; that span reads FTAETRMS. Positions 513 and 517 each coordinate Mg(2+). 3 helical membrane-spanning segments follow: residues 569 to 591, 611 to 631, and 644 to 664; these read ALTT…ALMM, AIIS…PIAM, and IFIN…FLGI.

Belongs to the cation transport ATPase (P-type) (TC 3.A.3) family. Type IA subfamily. The system is composed of three essential subunits: KdpA, KdpB and KdpC.

The protein resides in the cell membrane. The enzyme catalyses K(+)(out) + ATP + H2O = K(+)(in) + ADP + phosphate + H(+). In terms of biological role, part of the high-affinity ATP-driven potassium transport (or Kdp) system, which catalyzes the hydrolysis of ATP coupled with the electrogenic transport of potassium into the cytoplasm. This subunit is responsible for energy coupling to the transport system and for the release of the potassium ions to the cytoplasm. This is Potassium-transporting ATPase ATP-binding subunit from Staphylococcus aureus (strain bovine RF122 / ET3-1).